The primary structure comprises 34 residues: Toxin Ptu1 (34 aa).

3 disulfides stabilise this stretch: cysteine 5-cysteine 20, cysteine 12-cysteine 26, and cysteine 19-cysteine 33.

It localises to the secreted. In terms of biological role, binds reversibly and blocks N-type voltage-gated calcium channels (Cav). This Peirates turpis (Assassin bug) protein is Toxin Ptu1.